Here is a 453-residue protein sequence, read N- to C-terminus: uncharacterized protein (453 aa).

A TRAM domain is found at 5–63; the sequence is LLKKNQSVELTIEDLTHDGSGVGKIDGYPLFIPNALPGEKITAKITKLNKNYGFARMEN. [4Fe-4S] cluster is bound by residues Cys76, Cys82, Cys85, and Cys162. 4 residues coordinate S-adenosyl-L-methionine: Gln285, Tyr314, Glu335, and Asp383. Cys410 functions as the Nucleophile in the catalytic mechanism.

It belongs to the class I-like SAM-binding methyltransferase superfamily. RNA M5U methyltransferase family.

This is an uncharacterized protein from Listeria innocua serovar 6a (strain ATCC BAA-680 / CLIP 11262).